A 206-amino-acid polypeptide reads, in one-letter code: Urease accessory protein UreG (206 aa).

Residue 15-22 participates in GTP binding; the sequence is GPVGSGKT.

It belongs to the SIMIBI class G3E GTPase family. UreG subfamily. In terms of assembly, homodimer. UreD, UreF and UreG form a complex that acts as a GTP-hydrolysis-dependent molecular chaperone, activating the urease apoprotein by helping to assemble the nickel containing metallocenter of UreC. The UreE protein probably delivers the nickel.

It is found in the cytoplasm. Functionally, facilitates the functional incorporation of the urease nickel metallocenter. This process requires GTP hydrolysis, probably effectuated by UreG. This Ralstonia pickettii (strain 12J) protein is Urease accessory protein UreG.